The sequence spans 290 residues: Shikimate dehydrogenase (NADP(+)) (290 aa).

Shikimate is bound by residues 21–23 (SLS) and Thr68. The active-site Proton acceptor is the Lys72. Glu84 contributes to the NADP(+) binding site. Positions 93 and 108 each coordinate shikimate. NADP(+)-binding positions include 132 to 136 (GYGGA) and Leu230. Tyr232 is a shikimate binding site. Gly253 lines the NADP(+) pocket.

It belongs to the shikimate dehydrogenase family. Homodimer.

It carries out the reaction shikimate + NADP(+) = 3-dehydroshikimate + NADPH + H(+). It functions in the pathway metabolic intermediate biosynthesis; chorismate biosynthesis; chorismate from D-erythrose 4-phosphate and phosphoenolpyruvate: step 4/7. Its function is as follows. Involved in the biosynthesis of the chorismate, which leads to the biosynthesis of aromatic amino acids. Catalyzes the reversible NADPH linked reduction of 3-dehydroshikimate (DHSA) to yield shikimate (SA). The polypeptide is Shikimate dehydrogenase (NADP(+)) (Synechocystis sp. (strain ATCC 27184 / PCC 6803 / Kazusa)).